The following is a 258-amino-acid chain: MVKIIFVFFIFLSSFSYANDDKLYRADSRPPDEIKQSGGLMPRGQSEYFDRGTQMNINLYDHARGTQTGFVRHDDGYVSTSISLRSAHLVGQTILSGHSTYYIYVIATAPNMFNVNDVLGAYSPHPDEQEVSALGGIPYSQIYGWYRVHFGVLDEQLHRNRGYRDRYYSNLDIAPAADGYGLAGFPPEHRAWREEPWIHHAPPGCGNAPRSSMSNTCDEKTQSLGVKFLDEYQSKVKRQIFSGYQSDIDTHNRIKDEL.

An N-terminal signal peptide occupies residues 1–18; the sequence is MVKIIFVFFIFLSSFSYA. NAD(+) is bound by residues 25 to 28 and 41 to 43; these read RADS and MPR. Glutamate 130 is an active-site residue. Cysteine 205 and cysteine 217 are disulfide-bonded.

This sequence belongs to the enterotoxin A family. The holotoxin (choleragen) consists of a pentameric ring of B subunits whose central pore is occupied by the A subunit. The A subunit contains two chains, A1 and A2, linked by a disulfide bridge. Interaction with the host protein ARF6 causes a conformation change so that the enterotoxin subunit A1 can bind NAD and catalyze the ADP-ribosylation of the host Gs alpha.

Its function is as follows. The A1 chain catalyzes the ADP-ribosylation of Gs alpha, a GTP-binding regulatory protein, to activate the adenylate cyclase. This leads to an overproduction of cAMP and eventually to a hypersecretion of chloride and bicarbonate followed by water, resulting in the characteristic cholera stool. The A2 chain tethers A1 to the pentameric ring. This is Cholera enterotoxin subunit A (ctxA) from Vibrio cholerae serotype O1 (strain ATCC 39315 / El Tor Inaba N16961).